Consider the following 291-residue polypeptide: N-acetylmannosamine kinase (291 aa).

ATP is bound by residues 5–12 and 132–139; these read AIDIGGTK and GVGGGVVS. Positions 156, 166, 168, and 173 each coordinate Zn(2+).

It belongs to the ROK (NagC/XylR) family. NanK subfamily. In terms of assembly, homodimer.

It carries out the reaction an N-acyl-D-mannosamine + ATP = an N-acyl-D-mannosamine 6-phosphate + ADP + H(+). The protein operates within amino-sugar metabolism; N-acetylneuraminate degradation; D-fructose 6-phosphate from N-acetylneuraminate: step 2/5. Catalyzes the phosphorylation of N-acetylmannosamine (ManNAc) to ManNAc-6-P. The sequence is that of N-acetylmannosamine kinase from Shigella flexneri serotype 5b (strain 8401).